A 61-amino-acid chain; its full sequence is Large ribosomal subunit protein bL28 (61 aa).

Positions Met-1–Arg-26 are disordered.

The protein belongs to the bacterial ribosomal protein bL28 family.

This is Large ribosomal subunit protein bL28 from Pediococcus pentosaceus (strain ATCC 25745 / CCUG 21536 / LMG 10740 / 183-1w).